The following is a 199-amino-acid chain: NAD(P)H dehydrogenase (quinone) (199 aa).

Positions 4 to 190 constitute a Flavodoxin-like domain; the sequence is VLVLYYSAYG…AGARYQGRQI (187 aa). FMN-binding positions include 10–15 and 78–80; these read SAYGHI and TRF. Tyr-12 provides a ligand contact to NAD(+). Trp-98 lines the substrate pocket. FMN contacts are provided by residues 113 to 119 and His-134; that span reads SSATQHG.

Belongs to the WrbA family. Requires FMN as cofactor.

The enzyme catalyses a quinone + NADH + H(+) = a quinol + NAD(+). It catalyses the reaction a quinone + NADPH + H(+) = a quinol + NADP(+). This chain is NAD(P)H dehydrogenase (quinone), found in Bradyrhizobium diazoefficiens (strain JCM 10833 / BCRC 13528 / IAM 13628 / NBRC 14792 / USDA 110).